Consider the following 272-residue polypeptide: Putative pyruvate, phosphate dikinase regulatory protein (272 aa).

Glycine 147 to threonine 154 contributes to the ADP binding site.

Belongs to the pyruvate, phosphate/water dikinase regulatory protein family. PDRP subfamily.

The enzyme catalyses N(tele)-phospho-L-histidyl/L-threonyl-[pyruvate, phosphate dikinase] + ADP = N(tele)-phospho-L-histidyl/O-phospho-L-threonyl-[pyruvate, phosphate dikinase] + AMP + H(+). The catalysed reaction is N(tele)-phospho-L-histidyl/O-phospho-L-threonyl-[pyruvate, phosphate dikinase] + phosphate + H(+) = N(tele)-phospho-L-histidyl/L-threonyl-[pyruvate, phosphate dikinase] + diphosphate. Functionally, bifunctional serine/threonine kinase and phosphorylase involved in the regulation of the pyruvate, phosphate dikinase (PPDK) by catalyzing its phosphorylation/dephosphorylation. This Clostridium botulinum (strain Alaska E43 / Type E3) protein is Putative pyruvate, phosphate dikinase regulatory protein.